The chain runs to 294 residues: Large ribosomal subunit protein uL4m (294 aa).

Positions Glu119–Gly139 are disordered. Arg147 is modified (omega-N-methylarginine).

Belongs to the universal ribosomal protein uL4 family. Component of the mitochondrial ribosome large subunit (39S) which comprises a 16S rRNA and about 50 distinct proteins. Interacts with MIEF1 upstream open reading frame protein.

The protein resides in the mitochondrion. In Mus musculus (Mouse), this protein is Large ribosomal subunit protein uL4m (Mrpl4).